The chain runs to 180 residues: NAD(P)H-quinone oxidoreductase subunit I, chloroplastic (180 aa).

4Fe-4S ferredoxin-type domains lie at 55–84 and 95–124; these read GRIH…VDWR and LNYS…MTEE. [4Fe-4S] cluster-binding residues include Cys-64, Cys-67, Cys-70, Cys-74, Cys-104, Cys-107, Cys-110, and Cys-114.

The protein belongs to the complex I 23 kDa subunit family. In terms of assembly, NDH is composed of at least 16 different subunits, 5 of which are encoded in the nucleus. The cofactor is [4Fe-4S] cluster.

It is found in the plastid. The protein resides in the chloroplast thylakoid membrane. The enzyme catalyses a plastoquinone + NADH + (n+1) H(+)(in) = a plastoquinol + NAD(+) + n H(+)(out). The catalysed reaction is a plastoquinone + NADPH + (n+1) H(+)(in) = a plastoquinol + NADP(+) + n H(+)(out). NDH shuttles electrons from NAD(P)H:plastoquinone, via FMN and iron-sulfur (Fe-S) centers, to quinones in the photosynthetic chain and possibly in a chloroplast respiratory chain. The immediate electron acceptor for the enzyme in this species is believed to be plastoquinone. Couples the redox reaction to proton translocation, and thus conserves the redox energy in a proton gradient. This Drimys granadensis protein is NAD(P)H-quinone oxidoreductase subunit I, chloroplastic.